Reading from the N-terminus, the 228-residue chain is Octanoyltransferase (228 aa).

Residues 32-214 (DVVPDTVLLV…HLRRLFERDW (183 aa)) enclose the BPL/LPL catalytic domain. Substrate-binding positions include 77–84 (RGGDVTYH), 144–146 (SVG), and 157–159 (GIA). The active-site Acyl-thioester intermediate is Cys-175.

This sequence belongs to the LipB family.

The protein resides in the cytoplasm. It carries out the reaction octanoyl-[ACP] + L-lysyl-[protein] = N(6)-octanoyl-L-lysyl-[protein] + holo-[ACP] + H(+). Its pathway is protein modification; protein lipoylation via endogenous pathway; protein N(6)-(lipoyl)lysine from octanoyl-[acyl-carrier-protein]: step 1/2. In terms of biological role, catalyzes the transfer of endogenously produced octanoic acid from octanoyl-acyl-carrier-protein onto the lipoyl domains of lipoate-dependent enzymes. Lipoyl-ACP can also act as a substrate although octanoyl-ACP is likely to be the physiological substrate. The chain is Octanoyltransferase from Syntrophobacter fumaroxidans (strain DSM 10017 / MPOB).